The following is a 130-amino-acid chain: Small ribosomal subunit protein uS9 (130 aa).

Belongs to the universal ribosomal protein uS9 family.

The protein is Small ribosomal subunit protein uS9 of Geotalea daltonii (strain DSM 22248 / JCM 15807 / FRC-32) (Geobacter daltonii).